Reading from the N-terminus, the 444-residue chain is Cholecystokinin receptor type A (444 aa).

The Extracellular segment spans residues M1–S56. N-linked (GlcNAc...) asparagine glycosylation is found at N25 and N39. The cysteines at positions 33 and 44 are disulfide-linked. A helical membrane pass occupies residues A57–I82. Over R83 to N92 the chain is Cytoplasmic. Residues I93–L119 traverse the membrane as a helical segment. Topologically, residues K120–K130 are extracellular. A disulfide bridge links C129 with C211. Residues T131–L152 traverse the membrane as a helical segment. At E153–H172 the chain is on the cytoplasmic side. The helical transmembrane segment at A173–I193 threads the bilayer. Residues Y194–Q225 lie on the Extracellular side of the membrane. An N-linked (GlcNAc...) asparagine glycan is attached at N205. Residues T226–L249 form a helical membrane-spanning segment. Over E250–R329 the chain is Cytoplasmic. The tract at residues K263–K288 is disordered. Residues M330–A350 traverse the membrane as a helical segment. Residues W351–G365 are Extracellular-facing. A helical transmembrane segment spans residues T366–M389. Residues N390–P444 are Cytoplasmic-facing. A lipid anchor (S-palmitoyl cysteine) is attached at C403.

It belongs to the G-protein coupled receptor 1 family. As to expression, pancreas and brain. Also expressed in the gastrointestinal system and vagus nerve.

The protein localises to the cell membrane. In terms of biological role, receptor for cholecystokinin. Mediates pancreatic growth and enzyme secretion, smooth muscle contraction of the gall bladder and stomach. Has a 1000-fold higher affinity for CCK rather than for gastrin. It modulates feeding and dopamine-induced behavior in the central and peripheral nervous system. This receptor mediates its action by association with G proteins that activate a phosphatidylinositol-calcium second messenger system. This is Cholecystokinin receptor type A (Cckar) from Rattus norvegicus (Rat).